The primary structure comprises 450 residues: Sorting nexin-4 (450 aa).

At methionine 1 the chain carries N-acetylmethionine. The disordered stretch occupies residues 1–46 (MEQAPPDPERQLQPAPLEPLGSPDAVLGAAVGKETEGAGEESSGVD). Serine 22 bears the Phosphoserine mark. The region spanning 61 to 187 (SVSEAEKRTG…YLFLTQEGNW (127 aa)) is the PX domain. A 1,2-diacyl-sn-glycero-3-phospho-(1D-myo-inositol-3-phosphate) is bound by residues arginine 106, serine 108, lysine 132, and arginine 154.

It belongs to the sorting nexin family. As to quaternary structure, heterodimer; heterodimerizes with SNX7 or SNX30. Interacts with WWC1/KIBRA. Identified in a complex with WWC1/KIBRA and dynein components DYNLL1 and DYNC1I2. Interacts with BIN1.

The protein resides in the early endosome. Its subcellular location is the early endosome membrane. Functionally, involved in the regulation of endocytosis and in several stages of intracellular trafficking. Plays a role in recycling endocytosed transferrin receptor and prevent its degradation. Involved in autophagosome assembly by regulating trafficking and recycling of phospholipid scramblase ATG9A. The protein is Sorting nexin-4 of Pongo abelii (Sumatran orangutan).